The primary structure comprises 537 residues: MHFSLKQLAVAAFYATNLGSAYVIPQFFQEAFQQEEPIENYLPQLNDDDSSAVAANIPKPHIPYFMKPHVESEKLQDKIKVDDLNATAWDLYRLANYSTPDYGHPTRVIGSKGHNKTMEYILNVFDDMQDYYDVSLQEFEALSGKIISFNLSDAETGKSFANTTAFALSPPVDGFVGKLVEIPNLGCEEKDYASVVPPRHNEKQIALIERGKCPFGDKSNLAGKFGFTAVVIYDNEPKSKEGLHGTLGEPTKHTVATVGVPYKVGKKLIANIALNIDYSLYFAMDSYVEFIKTQNIIADTKHGDPDNIVALGAHSDSVEEGPGINDDGSGTISLLNVAKQLTHFKINNKVRFAWWAAEEEGLLGSNFYAYNLTKEENSKIRVFMDYDMMASPNYEYEIYDANNKENPKGSEELKNLYVDYYKAHHLNYTLVPFDGRSDYVGFINNGIPAGGIATGAEKNNVNNGKVLDRCYHQLCDDVSNLSWDAFITNTKLIAHSVATYADSFEGFPKRETQKHKEVDILNAQQPQFKYRADFLII.

The signal sequence occupies residues methionine 1–alanine 21. Residues tyrosine 22 to asparagine 56 constitute a propeptide that is removed on maturation. N-linked (GlcNAc...) asparagine glycosylation is found at asparagine 85, asparagine 96, asparagine 115, asparagine 150, and asparagine 162. 2 residues coordinate Zn(2+): histidine 314 and aspartate 326. The active-site Proton acceptor is glutamate 358. Residue glutamate 359 participates in Zn(2+) binding. N-linked (GlcNAc...) asparagine glycosylation is present at asparagine 371. Aspartate 387 contributes to the Zn(2+) binding site. Asparagine 427 carries an N-linked (GlcNAc...) asparagine glycan. Histidine 472 contributes to the Zn(2+) binding site. Asparagine 480 carries an N-linked (GlcNAc...) asparagine glycan.

This sequence belongs to the peptidase M28 family. M28A subfamily. As to quaternary structure, monomer. Zn(2+) is required as a cofactor.

It localises to the vacuole. It carries out the reaction Preferentially, release of N-terminal lysine.. This is Aminopeptidase Y (APE3) from Saccharomyces cerevisiae (strain ATCC 204508 / S288c) (Baker's yeast).